A 463-amino-acid polypeptide reads, in one-letter code: Putative sodium-coupled neutral amino acid transporter 11 (463 aa).

The tract at residues 1–27 (MGYPGQRPVIPPQSHRDDRETLVSEHK) is disordered. Positions 14 to 25 (SHRDDRETLVSE) are enriched in basic and acidic residues. 11 consecutive transmembrane segments (helical) span residues 38 to 58 (AVFN…PYSM), 65 to 85 (LGIL…ILLI), 105 to 125 (GFPG…IAMI), 150 to 170 (LLIG…LPLS), 178 to 198 (LGKI…IVVA), 225 to 245 (VGVM…YGSL), 256 to 276 (IIHV…TCGY), 298 to 320 (VTFG…CFVT), 336 to 356 (VCHI…SLLI), 358 to 378 (CLGI…IFII), and 397 to 417 (IMSC…FVMA). Residues asparagine 437, asparagine 442, and asparagine 458 are each glycosylated (N-linked (GlcNAc...) asparagine).

It belongs to the amino acid/polyamine transporter 2 family.

The protein resides in the membrane. Its function is as follows. Putative sodium-dependent amino acid/proton antiporter. The polypeptide is Putative sodium-coupled neutral amino acid transporter 11 (SLC38A11) (Bos taurus (Bovine)).